Consider the following 306-residue polypeptide: Ribonuclease Z (306 aa).

Zn(2+) contacts are provided by H63, H65, D67, H68, H140, D211, and H269. Residue D67 is the Proton acceptor of the active site.

Belongs to the RNase Z family. As to quaternary structure, homodimer. The cofactor is Zn(2+).

It carries out the reaction Endonucleolytic cleavage of RNA, removing extra 3' nucleotides from tRNA precursor, generating 3' termini of tRNAs. A 3'-hydroxy group is left at the tRNA terminus and a 5'-phosphoryl group is left at the trailer molecule.. Zinc phosphodiesterase, which displays some tRNA 3'-processing endonuclease activity. Probably involved in tRNA maturation, by removing a 3'-trailer from precursor tRNA. In Listeria monocytogenes serovar 1/2a (strain ATCC BAA-679 / EGD-e), this protein is Ribonuclease Z.